Reading from the N-terminus, the 170-residue chain is Adenine phosphoribosyltransferase (170 aa).

This sequence belongs to the purine/pyrimidine phosphoribosyltransferase family. In terms of assembly, homodimer.

The protein resides in the cytoplasm. It carries out the reaction AMP + diphosphate = 5-phospho-alpha-D-ribose 1-diphosphate + adenine. It functions in the pathway purine metabolism; AMP biosynthesis via salvage pathway; AMP from adenine: step 1/1. In terms of biological role, catalyzes a salvage reaction resulting in the formation of AMP, that is energically less costly than de novo synthesis. The polypeptide is Adenine phosphoribosyltransferase (Prochlorococcus marinus (strain AS9601)).